The sequence spans 300 residues: Glycine--tRNA ligase alpha subunit (300 aa).

Belongs to the class-II aminoacyl-tRNA synthetase family. Tetramer of two alpha and two beta subunits.

It is found in the cytoplasm. The catalysed reaction is tRNA(Gly) + glycine + ATP = glycyl-tRNA(Gly) + AMP + diphosphate. This Pseudoalteromonas translucida (strain TAC 125) protein is Glycine--tRNA ligase alpha subunit.